We begin with the raw amino-acid sequence, 276 residues long: Formamidopyrimidine-DNA glycosylase (276 aa).

P2 functions as the Schiff-base intermediate with DNA in the catalytic mechanism. The Proton donor role is filled by E3. K58 (proton donor; for beta-elimination activity) is an active-site residue. The DNA site is built by H94, R112, and R157. Residues 242–276 (FVYDRAGEPCRVCGAPIRQIVQGQRSTYFCPNCQR) form an FPG-type zinc finger. Residue R266 is the Proton donor; for delta-elimination activity of the active site.

The protein belongs to the FPG family. In terms of assembly, monomer. It depends on Zn(2+) as a cofactor.

The enzyme catalyses Hydrolysis of DNA containing ring-opened 7-methylguanine residues, releasing 2,6-diamino-4-hydroxy-5-(N-methyl)formamidopyrimidine.. The catalysed reaction is 2'-deoxyribonucleotide-(2'-deoxyribose 5'-phosphate)-2'-deoxyribonucleotide-DNA = a 3'-end 2'-deoxyribonucleotide-(2,3-dehydro-2,3-deoxyribose 5'-phosphate)-DNA + a 5'-end 5'-phospho-2'-deoxyribonucleoside-DNA + H(+). Involved in base excision repair of DNA damaged by oxidation or by mutagenic agents. Acts as a DNA glycosylase that recognizes and removes damaged bases. Has a preference for oxidized purines, such as 7,8-dihydro-8-oxoguanine (8-oxoG). Has AP (apurinic/apyrimidinic) lyase activity and introduces nicks in the DNA strand. Cleaves the DNA backbone by beta-delta elimination to generate a single-strand break at the site of the removed base with both 3'- and 5'-phosphates. This chain is Formamidopyrimidine-DNA glycosylase, found in Burkholderia pseudomallei (strain 1710b).